The primary structure comprises 371 residues: Vasopressin V2 receptor (371 aa).

At 1 to 38 (MLLVSTVSAVPGLFSPPSSPSNSSQEELLDDRDPLLVR) the chain is on the extracellular side. The N-linked (GlcNAc...) asparagine glycan is linked to N22. A helical membrane pass occupies residues 39-63 (AELALLSTIFVAVALSNGLVLGALI). Topologically, residues 64–77 (RRGRRGRWAPMHVF) are cytoplasmic. A helical membrane pass occupies residues 78–98 (ISHLCLADLAVALFQVLPQLA). Residues 99–113 (WDATDRFHGPDALCR) lie on the Extracellular side of the membrane. The chain crosses the membrane as a helical span at residues 114–135 (AVKYLQMVGMYASSYMILAMTL). Over 136–159 (DRHRAICRPMLAYRHGGGARWNRP) the chain is Cytoplasmic. A helical membrane pass occupies residues 160 to 180 (VLVAWAFSLLLSLPQLFIFAQ). Topologically, residues 181–200 (RDVGNGSGVFDCWARFAEPW) are extracellular. An N-linked (GlcNAc...) asparagine glycan is attached at N185. A helical transmembrane segment spans residues 201–220 (GLRAYVTWIALMVFVAPALG). Topologically, residues 221–271 (IAACQVLIFREIHASLVPGPSERAGRRRRGRRTGSPSEGAHVSAAMAKTVR) are cytoplasmic. Residues 240–260 (PSERAGRRRRGRRTGSPSEGA) are disordered. A helical transmembrane segment spans residues 272 to 293 (MTLVIVIVYVLCWAPFFLVQLW). The Extracellular segment spans residues 294-308 (AAWDPEAPLERPPFV). Residues 309–328 (LLMLLASLNSCTNPWIYASF) form a helical membrane-spanning segment. The Cytoplasmic portion of the chain corresponds to 329 to 371 (SSSVSSELRSLLCCAQRHTTHSLGPQDESCATASSSLMKDTPS). Residues C341 and C342 are each lipidated (S-palmitoyl cysteine). Residues 349–371 (HSLGPQDESCATASSSLMKDTPS) form a disordered region. A compositionally biased stretch (polar residues) spans 357–371 (SCATASSSLMKDTPS).

This sequence belongs to the G-protein coupled receptor 1 family. Vasopressin/oxytocin receptor subfamily. As to quaternary structure, interacts with ARRDC4. Identified in a complex containing at least ARRDC4, V2R and HGS. Interacts with TMEM147. Kidney.

The protein localises to the cell membrane. Its function is as follows. Receptor for arginine vasopressin. The activity of this receptor is mediated by G proteins which activate adenylate cyclase. Involved in renal water reabsorption. The chain is Vasopressin V2 receptor (Avpr2) from Rattus norvegicus (Rat).